The primary structure comprises 95 residues: Cell division topological specificity factor (95 aa).

Belongs to the MinE family.

Its function is as follows. Prevents the cell division inhibition by proteins MinC and MinD at internal division sites while permitting inhibition at polar sites. This ensures cell division at the proper site by restricting the formation of a division septum at the midpoint of the long axis of the cell. This chain is Cell division topological specificity factor, found in Microcystis aeruginosa (strain NIES-843 / IAM M-2473).